The following is a 331-amino-acid chain: Phosphate acyltransferase (331 aa).

Belongs to the PlsX family. As to quaternary structure, homodimer. Probably interacts with PlsY.

The protein resides in the cytoplasm. The enzyme catalyses a fatty acyl-[ACP] + phosphate = an acyl phosphate + holo-[ACP]. The protein operates within lipid metabolism; phospholipid metabolism. In terms of biological role, catalyzes the reversible formation of acyl-phosphate (acyl-PO(4)) from acyl-[acyl-carrier-protein] (acyl-ACP). This enzyme utilizes acyl-ACP as fatty acyl donor, but not acyl-CoA. This chain is Phosphate acyltransferase, found in Malacoplasma penetrans (strain HF-2) (Mycoplasma penetrans).